The following is a 206-amino-acid chain: MAANKSKGQSSLALHKVIMVGSGGVGKSALTLQFMYDEFVEDYEPTKADSYRKKVVLDGEEVQIDILDTAGQEDYAAIRDNYFRSGEGFLLVFSITEHESFTATAEFREQILRVKAEEDKIPLLVVGNKSDLEERRQVPVEEARSKAEEWGVQYVETSAKTRANVDKVFFDLMREIRTKKMSENKDKNGKKSGKNKKSFKERCCLL.

Gly21–Ala29 provides a ligand contact to GTP. Residues Tyr43–Tyr51 carry the Effector region motif. GTP-binding positions include Asp68–Gln72, Asn128–Asp131, and Ser158–Lys160. The span at Lys180–Gly189 shows a compositional bias: basic and acidic residues. The interval Lys180–Leu206 is disordered. Position 203 is a cysteine methyl ester (Cys203). Cys203 carries the S-geranylgeranyl cysteine lipid modification. The propeptide at Cys204 to Leu206 is removed in mature form.

Belongs to the small GTPase superfamily. Ras family. As to quaternary structure, interacts with EXOC2/Sec5 and EXOC8/Exo84. Interacts (via effector domain) with RALBP1. Prenylation is essential for membrane localization. In terms of processing, the farnesylated form confers resistance to the proapoptotic and anti-anchorage-dependent growth effects of some geranylgeranyltransferase I inhibitors.

The protein localises to the cell membrane. It localises to the midbody. The enzyme catalyses GTP + H2O = GDP + phosphate + H(+). With respect to regulation, alternates between an inactive form bound to GDP and an active form bound to GTP. Activated by a guanine nucleotide-exchange factor (GEF) and inactivated by a GTPase-activating protein (GAP). Functionally, multifunctional GTPase involved in a variety of cellular processes including gene expression, cell migration, cell proliferation, oncogenic transformation and membrane trafficking. Accomplishes its multiple functions by interacting with distinct downstream effectors. Acts as a GTP sensor for GTP-dependent exocytosis of dense core vesicles. Required both to stabilize the assembly of the exocyst complex and to localize functional exocyst complexes to the leading edge of migrating cells. Required for suppression of apoptosis. In late stages of cytokinesis, upon completion of the bridge formation between dividing cells, mediates exocyst recruitment to the midbody to drive abscission. Involved in ligand-dependent receptor mediated endocytosis of the EGF and insulin receptors. The sequence is that of Ras-related protein Ral-B (RALB) from Macaca fascicularis (Crab-eating macaque).